We begin with the raw amino-acid sequence, 378 residues long: UDP-N-acetylglucosamine--N-acetylmuramyl-(pentapeptide) pyrophosphoryl-undecaprenol N-acetylglucosamine transferase (378 aa).

UDP-N-acetyl-alpha-D-glucosamine contacts are provided by residues 14-16 (TGG), Asn125, Arg165, Ser193, and Gln293.

This sequence belongs to the glycosyltransferase 28 family. MurG subfamily.

It localises to the cell inner membrane. It carries out the reaction di-trans,octa-cis-undecaprenyl diphospho-N-acetyl-alpha-D-muramoyl-L-alanyl-D-glutamyl-meso-2,6-diaminopimeloyl-D-alanyl-D-alanine + UDP-N-acetyl-alpha-D-glucosamine = di-trans,octa-cis-undecaprenyl diphospho-[N-acetyl-alpha-D-glucosaminyl-(1-&gt;4)]-N-acetyl-alpha-D-muramoyl-L-alanyl-D-glutamyl-meso-2,6-diaminopimeloyl-D-alanyl-D-alanine + UDP + H(+). It participates in cell wall biogenesis; peptidoglycan biosynthesis. Functionally, cell wall formation. Catalyzes the transfer of a GlcNAc subunit on undecaprenyl-pyrophosphoryl-MurNAc-pentapeptide (lipid intermediate I) to form undecaprenyl-pyrophosphoryl-MurNAc-(pentapeptide)GlcNAc (lipid intermediate II). In Bartonella tribocorum (strain CIP 105476 / IBS 506), this protein is UDP-N-acetylglucosamine--N-acetylmuramyl-(pentapeptide) pyrophosphoryl-undecaprenol N-acetylglucosamine transferase.